A 318-amino-acid polypeptide reads, in one-letter code: Ethylene-responsive transcription factor FZP (318 aa).

Residues 1-15 (MNTRGSGSSSSSSSS) are compositionally biased toward low complexity. Disordered stretches follow at residues 1-59 (MNTR…GRFL) and 158-178 (SYGH…SGAS). The span at 25–37 (PPKPASQPSPPSS) shows a compositional bias: pro residues. A DNA-binding region (AP2/ERF) is located at residues 57–114 (RFLGVRRRPWGRYAAEIRDPTTKERHWLGTFDTAQEAALAYDRAALSMKGAQARTNFV). The segment covering 160–171 (GHHHHHHHHHGH) has biased composition (basic residues).

The protein belongs to the AP2/ERF transcription factor family. ERF subfamily.

The protein localises to the nucleus. Required to prevent the formation of axillary meristems within the spikelet meristem and permit the subsequent establishment of floral meristem identity. Mediates the transition from spikelet to floret meristem. Determines the transition from panicle branching to spikelet formation. May specify floral organ identity by regulating the class B genes (Agamous-like genes) MADS6 and MADS17, as well as class E genes MADS1, MADS7 and MADS8 in floral meristem. Possesses transactivation activity. In Oryza sativa subsp. japonica (Rice), this protein is Ethylene-responsive transcription factor FZP.